A 1588-amino-acid polypeptide reads, in one-letter code: uncharacterized protein (1588 aa).

A compositionally biased stretch (basic and acidic residues) spans 486-495; it reads RKRLTSKTED. 2 disordered regions span residues 486 to 515 and 1146 to 1176; these read RKRL…KRRP and GGQD…RELN. A compositionally biased stretch (polar residues) spans 498-507; it reads NQWTRDCQNS. Positions 1150 to 1169 are enriched in low complexity; it reads NVSDQSENQSENQSLESETS.

It is found in the virion. This is an uncharacterized protein from Acanthamoeba polyphaga (Amoeba).